The primary structure comprises 123 residues: uncharacterized protein (123 aa).

Residues 89–123 form a disordered region; the sequence is GVGGRKLGSEGQSLSENSEQRSLMRWGCGGSSERR. The span at 98 to 109 shows a compositional bias: polar residues; the sequence is EGQSLSENSEQR.

This is an uncharacterized protein from Encephalitozoon cuniculi (strain GB-M1) (Microsporidian parasite).